Consider the following 411-residue polypeptide: Snake venom metalloproteinase VMP1 (411 aa).

Positions 1 to 20 (MIQVLLVTICLAAFPYQGSS) are cleaved as a signal peptide. Positions 21-189 (IILESGNVND…KKAFQLNLTP (169 aa)) are excised as a propeptide. Residues 197–393 (RYVELVIIAD…KNPQCILNKP (197 aa)) form the Peptidase M12B domain. Glu-200 and Asp-284 together coordinate Ca(2+). Intrachain disulfides connect Cys-308-Cys-388, Cys-348-Cys-372, and Cys-350-Cys-355. Residue Asn-311 is glycosylated (N-linked (GlcNAc...) asparagine). Residue His-333 participates in Zn(2+) binding. Glu-334 is a catalytic residue. Residues His-337 and His-343 each coordinate Zn(2+). Cys-388, Asn-391, Val-403, Asn-406, Leu-408, and Glu-410 together coordinate Ca(2+).

The protein belongs to the venom metalloproteinase (M12B) family. P-I subfamily. In terms of assembly, monomer. It depends on Zn(2+) as a cofactor. In terms of tissue distribution, expressed by the venom gland.

It localises to the secreted. Inhibited by EDTA and 1,10-phenanthroline, but not by PMSF. Functionally, this venom zinc protease has fibrinolytic activity. The recombinant enzyme cleaves both alpha- (FGA) and beta-chains (FGB) of fibrinogen, but not the gamma-chain. The recombinant protein does not produce hemorrhage in mice and does not have effect on ADP- or collagen-stimulated platelet aggregation. The protein is Snake venom metalloproteinase VMP1 of Agkistrodon piscivorus leucostoma (Western cottonmouth).